The following is a 306-amino-acid chain: NADH-cytochrome b5 reductase 2-B (306 aa).

The chain crosses the membrane as a helical span at residues 12 to 32; the sequence is PLLLSSGIAVTAAAAVYFSTG. The 105-residue stretch at 53-157 folds into the FAD-binding FR-type domain; sequence STWVDLPLVK…TGPIVKYEWK (105 aa). 160-195 lines the FAD pocket; sequence KFDSVTLLGAGSGITPLYQLMGSILSNPEDKTKINL.

Belongs to the flavoprotein pyridine nucleotide cytochrome reductase family. FAD serves as cofactor.

The protein localises to the mitochondrion outer membrane. The enzyme catalyses 2 Fe(III)-[cytochrome b5] + NADH = 2 Fe(II)-[cytochrome b5] + NAD(+) + H(+). May mediate the reduction of outer membrane cytochrome b5. This chain is NADH-cytochrome b5 reductase 2-B (MCR1B), found in Vanderwaltozyma polyspora (strain ATCC 22028 / DSM 70294 / BCRC 21397 / CBS 2163 / NBRC 10782 / NRRL Y-8283 / UCD 57-17) (Kluyveromyces polysporus).